A 961-amino-acid polypeptide reads, in one-letter code: Integrator complex subunit 7 (961 aa).

The segment covering 937-955 (QVRLQQQQGQPPSQQQQQR) has biased composition (low complexity). The segment at 937 to 961 (QVRLQQQQGQPPSQQQQQRTAYSRF) is disordered.

The protein belongs to the Integrator subunit 7 family. In terms of assembly, component of the Integrator complex, composed of core subunits INTS1, INTS2, INTS3, INTS4, INTS5, INTS6, INTS7, INTS8, INTS9/RC74, INTS10, INTS11/CPSF3L, INTS12, INTS13, INTS14 and INTS15. The core complex associates with protein phosphatase 2A subunits PPP2CA and PPP2R1A, to form the Integrator-PP2A (INTAC) complex.

It is found in the nucleus. The protein localises to the chromosome. It localises to the cytoplasm. Functionally, component of the integrator complex, a multiprotein complex that terminates RNA polymerase II (Pol II) transcription in the promoter-proximal region of genes. The integrator complex provides a quality checkpoint during transcription elongation by driving premature transcription termination of transcripts that are unfavorably configured for transcriptional elongation: the complex terminates transcription by (1) catalyzing dephosphorylation of the C-terminal domain (CTD) of Pol II subunit POLR2A/RPB1 and SUPT5H/SPT5, (2) degrading the exiting nascent RNA transcript via endonuclease activity and (3) promoting the release of Pol II from bound DNA. The integrator complex is also involved in terminating the synthesis of non-coding Pol II transcripts, such as enhancer RNAs (eRNAs), small nuclear RNAs (snRNAs), telomerase RNAs and long non-coding RNAs (lncRNAs). The sequence is that of Integrator complex subunit 7 (INTS7) from Gallus gallus (Chicken).